The sequence spans 181 residues: 6,7-dimethyl-8-ribityllumazine synthase (181 aa).

Residues Tyr27, 58–60 (ALE), and 87–89 (CVI) each bind 5-amino-6-(D-ribitylamino)uracil. Residue 92 to 93 (ET) coordinates (2S)-2-hydroxy-3-oxobutyl phosphate. The active-site Proton donor is His95. Residue Asn120 coordinates 5-amino-6-(D-ribitylamino)uracil. Arg134 serves as a coordination point for (2S)-2-hydroxy-3-oxobutyl phosphate.

The protein belongs to the DMRL synthase family.

It catalyses the reaction (2S)-2-hydroxy-3-oxobutyl phosphate + 5-amino-6-(D-ribitylamino)uracil = 6,7-dimethyl-8-(1-D-ribityl)lumazine + phosphate + 2 H2O + H(+). It functions in the pathway cofactor biosynthesis; riboflavin biosynthesis; riboflavin from 2-hydroxy-3-oxobutyl phosphate and 5-amino-6-(D-ribitylamino)uracil: step 1/2. Functionally, catalyzes the formation of 6,7-dimethyl-8-ribityllumazine by condensation of 5-amino-6-(D-ribitylamino)uracil with 3,4-dihydroxy-2-butanone 4-phosphate. This is the penultimate step in the biosynthesis of riboflavin. The polypeptide is 6,7-dimethyl-8-ribityllumazine synthase (Methylobacterium sp. (strain 4-46)).